The following is a 151-amino-acid chain: Ribosome maturation factor RimP (151 aa).

Belongs to the RimP family.

It localises to the cytoplasm. Required for maturation of 30S ribosomal subunits. The sequence is that of Ribosome maturation factor RimP from Shewanella frigidimarina (strain NCIMB 400).